Here is a 354-residue protein sequence, read N- to C-terminus: Peptide chain release factor 1 (354 aa).

N5-methylglutamine is present on glutamine 232.

It belongs to the prokaryotic/mitochondrial release factor family. Methylated by PrmC. Methylation increases the termination efficiency of RF1.

It localises to the cytoplasm. Peptide chain release factor 1 directs the termination of translation in response to the peptide chain termination codons UAG and UAA. The chain is Peptide chain release factor 1 from Jannaschia sp. (strain CCS1).